Reading from the N-terminus, the 684-residue chain is Protein EXECUTER 1, chloroplastic (684 aa).

The segment covering methionine 1 to arginine 31 has biased composition (polar residues). Residues methionine 1–arginine 46 constitute a chloroplast transit peptide. The interval methionine 1 to arginine 66 is disordered. A compositionally biased stretch (low complexity) spans serine 48–serine 61. The region spanning aspartate 127–asparagine 162 is the UVR domain. A disordered region spans residues threonine 278–glutamate 318. Residues serine 301–glutamate 318 show a composition bias toward acidic residues.

Its subcellular location is the plastid. It is found in the chloroplast. Together with EX2, enables higher plants to perceive singlet oxygen as a stress signal in plastid that activates a genetically determined nuclear stress response program which triggers a programmed cell death (PCD). This transfer of singlet oxygen-induced stress-related signals from the plastid to the nucleus that triggers genetically controlled PCD pathway is unique to photosynthetic eukaryotes and operates under mild stress conditions, impeding photosystem II (PSII) without causing photooxidative damage of the plant. This Arabidopsis thaliana (Mouse-ear cress) protein is Protein EXECUTER 1, chloroplastic.